The following is a 326-amino-acid chain: Phospho-N-acetylmuramoyl-pentapeptide-transferase (326 aa).

10 helical membrane-spanning segments follow: residues 3–23 (LPTKIFFTSFIFGFILSPYFI), 51–71 (TPTMGGVVILTSSLLPILFWV), 77–97 (ILLLVSITLSFALIGFIDDYL), 113–133 (ILIQFIVALVGMSVFKLYFTE), 143–163 (GIMIDFSYLYAPFAAFIVVGS), 175–195 (GLAATQIIASFVSLGLVAYMT), 199–219 (ISVILFCITFIGATLSFLWFN), 225–245 (IFMGDIGSLSIGAALGLTSVL), 250–270 (VLFAVIGVIFVIETLSVVIQV), and 306–326 (IVIKFLIITIVCSVFTVAFLL).

This sequence belongs to the glycosyltransferase 4 family. MraY subfamily. The cofactor is Mg(2+).

The protein localises to the cell membrane. It carries out the reaction UDP-N-acetyl-alpha-D-muramoyl-L-alanyl-gamma-D-glutamyl-meso-2,6-diaminopimeloyl-D-alanyl-D-alanine + di-trans,octa-cis-undecaprenyl phosphate = di-trans,octa-cis-undecaprenyl diphospho-N-acetyl-alpha-D-muramoyl-L-alanyl-D-glutamyl-meso-2,6-diaminopimeloyl-D-alanyl-D-alanine + UMP. Its pathway is cell wall biogenesis; peptidoglycan biosynthesis. Its function is as follows. Catalyzes the initial step of the lipid cycle reactions in the biosynthesis of the cell wall peptidoglycan: transfers peptidoglycan precursor phospho-MurNAc-pentapeptide from UDP-MurNAc-pentapeptide onto the lipid carrier undecaprenyl phosphate, yielding undecaprenyl-pyrophosphoryl-MurNAc-pentapeptide, known as lipid I. This is Phospho-N-acetylmuramoyl-pentapeptide-transferase from Wolbachia sp. subsp. Brugia malayi (strain TRS).